The sequence spans 427 residues: ATP-sensitive inward rectifier potassium channel 12 (427 aa).

At 1–77 the chain is on the cytoplasmic side; sequence MTAASRANPY…LADMFTTCVD (77 aa). C75 is subject to S-nitrosocysteine. The chain crosses the membrane as a helical span at residues 78–104; it reads IRWRYMLLIFSLAFLASWLLFGIIFWV. A 1,2-diacyl-sn-glycero-3-phospho-(1D-myo-inositol-4,5-bisphosphate) is bound by residues R79 and R81. At 105-129 the chain is on the extracellular side; sequence IAVAHGDLEPAEGRGRTPCVLQVHG. A disulfide bridge links C123 with C155. The segment at residues 130 to 146 is an intramembrane region (helical; Pore-forming); that stretch reads FMAAFLFSIETQTTIGY. The K(+) site is built by T143, I144, G145, and Y146. The Selectivity filter signature appears at 143–148; that stretch reads TIGYGL. Over 147–155 the chain is Extracellular; sequence GLRCVTEEC. Residues 156-183 form a helical membrane-spanning segment; that stretch reads PVAVFMVVAQSIVGCIIDSFMIGAIMAK. A 1,2-diacyl-sn-glycero-3-phospho-(1D-myo-inositol-4,5-bisphosphate) contacts are provided by K183 and K188. Residues 184-427 are Cytoplasmic-facing; it reads MARPKKRAQT…ERPYRRESEI (244 aa). The interval 387–427 is disordered; sequence DEEDEVATDRDGRSPQPEHDFDRLQASSAALERPYRRESEI. Over residues 393–409 the composition is skewed to basic and acidic residues; that stretch reads ATDRDGRSPQPEHDFDR. Positions 425–427 match the PDZ-binding motif; that stretch reads SEI.

The protein belongs to the inward rectifier-type potassium channel (TC 1.A.2.1) family. KCNJ12 subfamily. Homotetramer. Forms heteromer with KCNJ4. Can form heteromeric channels with Kir2.6/KCNJ18. Association, via its PDZ-recognition domain, with LIN7A, LIN7B, LIN7C, DLG1, CASK and APBA1 plays a key role in its localization and trafficking. In terms of tissue distribution, highest level in cerebellum.

It localises to the membrane. It is found in the cell membrane. Its subcellular location is the sarcolemma. The protein resides in the T-tubule. The catalysed reaction is K(+)(in) = K(+)(out). Its activity is regulated as follows. Activated by phosphatidylinositol 4,5-biphosphate (PtdIns(4,5)P2). PtdIns(4,5)P2 binding to the cytoplasmic side of the channel triggers a conformation change leading to channel opening. Inhibited by Ba(2+). In terms of biological role, inward rectifying potassium channel that probably participates in controlling the resting membrane potential in electrically excitable cells. It probably participates in establishing action potential waveform and excitability of neuronal and muscle tissues. Inward rectifier potassium channels are characterized by a greater tendency to allow potassium to flow into the cell rather than out of it. Their voltage dependence is regulated by the concentration of extracellular potassium; as external potassium is raised, the voltage range of the channel opening shifts to more positive voltages. The inward rectification is mainly due to the blockage of outward current by internal magnesium. This Mus musculus (Mouse) protein is ATP-sensitive inward rectifier potassium channel 12 (Kcnj12).